The sequence spans 696 residues: DNA ligase (696 aa).

Residues D41 to D45, S90 to L91, and E120 each bind NAD(+). K122 functions as the N6-AMP-lysine intermediate in the catalytic mechanism. Residues R143, E180, K296, and K320 each coordinate NAD(+). C414, C417, C433, and C439 together coordinate Zn(2+). The BRCT domain maps to S603 to E692.

The protein belongs to the NAD-dependent DNA ligase family. LigA subfamily. The cofactor is Mg(2+). It depends on Mn(2+) as a cofactor.

The enzyme catalyses NAD(+) + (deoxyribonucleotide)n-3'-hydroxyl + 5'-phospho-(deoxyribonucleotide)m = (deoxyribonucleotide)n+m + AMP + beta-nicotinamide D-nucleotide.. DNA ligase that catalyzes the formation of phosphodiester linkages between 5'-phosphoryl and 3'-hydroxyl groups in double-stranded DNA using NAD as a coenzyme and as the energy source for the reaction. It is essential for DNA replication and repair of damaged DNA. This is DNA ligase from Kineococcus radiotolerans (strain ATCC BAA-149 / DSM 14245 / SRS30216).